We begin with the raw amino-acid sequence, 195 residues long: Magnetosome membrane protein 22 (195 aa).

The span at 1 to 28 (MAAQTAASEAPAPAAAPADSPTTAGPTP) shows a compositional bias: low complexity. A disordered region spans residues 1-31 (MAAQTAASEAPAPAAAPADSPTTAGPTPDSV). The next 3 membrane-spanning stretches (helical) occupy residues 45-65 (VLAA…AAVV), 90-110 (SVIA…AVAV), and 115-135 (LIPG…AGAT).

The protein resides in the magnetosome membrane. The polypeptide is Magnetosome membrane protein 22 (Magnetospirillum gryphiswaldense (strain DSM 6361 / JCM 21280 / NBRC 15271 / MSR-1)).